A 136-amino-acid chain; its full sequence is Urease subunit beta (136 aa).

This sequence belongs to the urease beta subunit family. In terms of assembly, heterotrimer of UreA (gamma), UreB (beta) and UreC (alpha) subunits. Three heterotrimers associate to form the active enzyme.

Its subcellular location is the cytoplasm. The enzyme catalyses urea + 2 H2O + H(+) = hydrogencarbonate + 2 NH4(+). It functions in the pathway nitrogen metabolism; urea degradation; CO(2) and NH(3) from urea (urease route): step 1/1. The polypeptide is Urease subunit beta (Staphylococcus aureus (strain Mu3 / ATCC 700698)).